The chain runs to 760 residues: Cyclin-D-binding Myb-like transcription factor 1 (760 aa).

Residues Met1–Glu237 form an interaction with CCND2 region. Residues Asp24–Ser63 form a disordered region. Residues Asp37–Thr47 show a composition bias toward acidic residues. A required for transcriptional activation region spans residues Val87–Arg170. Residues Val87–Met458 form a required for DNA-binding region. Positions Gly176 to Thr690 are interaction with CCND1, CCND2 and CCND3. The Myb-like 1 domain maps to Gly225–Arg263. The 66-residue stretch at Lys268 to Gln333 folds into the HTH myb-type domain. The H-T-H motif DNA-binding region spans Trp306–Leu329. Residues Trp339–Lys388 enclose the Myb-like 2 domain. The tract at residues Ala459 to His760 is required for transcriptional activation. Disordered stretches follow at residues Asp593–Pro614 and Ile738–His760.

The protein belongs to the DMTF1 family. Interacts with the D-type cyclins CCND1, CCND2 and CCND3. Interaction with D-type cyclins may modulate transcriptional activation by this protein. In terms of processing, phosphorylated by the cyclin-D2/CDK4, cyclin-D3/CDK4 and cyclin-D2/CDK6 complexes and to a lesser extent by the cyclin-D1/CDK4 complex.

It localises to the nucleus. Transcriptional activator which activates the CDKN2A/ARF locus in response to Ras-Raf signaling, thereby promoting p53/TP53-dependent growth arrest. Binds to the consensus sequence 5'-CCCG[GT]ATGT-3'. This is Cyclin-D-binding Myb-like transcription factor 1 (Dmtf1) from Rattus norvegicus (Rat).